Consider the following 27-residue polypeptide: Trichocyst matrix protein T4-C (27 aa).

It belongs to the TMP family.

The protein localises to the trichocyst. Its function is as follows. Structural protein that crystallize inside the trichocyst matrix. The sequence is that of Trichocyst matrix protein T4-C (T4C) from Paramecium tetraurelia.